An 87-amino-acid chain; its full sequence is UPF0250 protein plu1293 (87 aa).

This sequence belongs to the UPF0250 family.

In Photorhabdus laumondii subsp. laumondii (strain DSM 15139 / CIP 105565 / TT01) (Photorhabdus luminescens subsp. laumondii), this protein is UPF0250 protein plu1293.